A 325-amino-acid chain; its full sequence is Lactonase drp35 (325 aa).

Ca(2+) contacts are provided by Glu46, Thr108, Gly110, Asp128, Thr131, Tyr133, Asp136, Asn183, Asp234, and Ser235. The active-site Proton donor is the Asp234.

This sequence belongs to the SMP-30/CGR1 family. The cofactor is Ca(2+).

Its subcellular location is the cytoplasm. Exhibits lactonase activity. Acts in cells with perturbed membrane integrity and is possibly related to the membrane homeostasis. The polypeptide is Lactonase drp35 (drp35) (Staphylococcus epidermidis (strain ATCC 12228 / FDA PCI 1200)).